Consider the following 191-residue polypeptide: Protein YceI (191 aa).

Residues 1-22 (MKKNLLGFTLASLLFTTGSAVA) form the signal peptide.

It belongs to the UPF0312 family. Type 1 subfamily.

Its subcellular location is the periplasm. The chain is Protein YceI from Salmonella dublin (strain CT_02021853).